A 504-amino-acid chain; its full sequence is Pre-mRNA-processing factor 19 (504 aa).

Serine 2 carries the post-translational modification N-acetylserine. The U-box domain occupies 2–73; that stretch reads SLICSISNEV…KPPSATSIPA (72 aa). Positions 68–223 are may mediate interaction with PSMC5; sequence ATSIPAILKA…VGLHSASIPG (156 aa). An N6-acetyllysine mark is found at lysine 122, lysine 179, lysine 244, and lysine 261. Residues 219–259 form a WD 1 repeat; sequence ASIPGILALDLCPSDTNKILTGGADKNVVVFDKSTEQILAT. 6 WD repeats span residues 262-301, 304-345, 348-387, 390-429, 433-472, and 473-503; these read GHTK…CVQV, AHES…TKVT, TSGC…NVAN, GHSG…NFKT, DNNF…LHFT, and EHSG…KFYS.

Belongs to the WD repeat PRP19 family. As to quaternary structure, homotetramer. Component of activated, catalytic and post-catalytic spliceosomes. Component of the Prp19 complex/PRP19C/Nineteen complex/NTC and related complexes described as PRP19-CDC5L splicing complex and PSO4 complex. A homotetramer of PRPF19, CDC5L, PLRG1 and BCAS2 constitute the core of those complexes. The interaction with CDC5L, PLRG1 and BCAS2 is direct within this core complex. At least three less stably associated proteins CTNNBL1, CWC15 and HSPA8 are found in the Prp19 complex. The Prp19 complex associates with the spliceosome during its assembly and remodeling recruiting additional proteins. Component of the XAB2 complex, a multimeric protein complex composed of XAB2, PRPF19, AQR, ZNF830, ISY1, and PPIE. Interacts with CWC22 and EIF4A3 in an RNA-independent manner. Interacts with RPA1 and RPA2; the PRP19-CDC5L complex is recruited to the sites of DNA repair where it interacts with the replication protein A complex (RPA). Interacts with SETMAR; required for SETMAR recruitment to site of DNA damage. Interacts with U2AF2; the interaction is direct and recruits the Prp19 complex to RNA polymerase II C-terminal domain (CTD) and the pre-mRNA. Interacts with PRPF3. Interacts with APEX1, DNTT and PSMB4. Interacts with KNSTRN. Interacts with PSMC5. Isoform 2 (via N-terminus) interacts with PPIA. Isoform 2 does not interact with CDC5L. Interacts with KHDC4. Interacts with USB1. Interacts with DDX41. Expressed in white and brown adipose tissues, brain and to a lower extent in liver, kidney, muscle, lung and spleen (at protein level).

It is found in the nucleus. The protein resides in the nucleoplasm. It localises to the cytoplasm. The protein localises to the cytoskeleton. Its subcellular location is the spindle. It is found in the lipid droplet. It carries out the reaction S-ubiquitinyl-[E2 ubiquitin-conjugating enzyme]-L-cysteine + [acceptor protein]-L-lysine = [E2 ubiquitin-conjugating enzyme]-L-cysteine + N(6)-ubiquitinyl-[acceptor protein]-L-lysine.. Its pathway is protein modification; protein ubiquitination. In terms of biological role, ubiquitin-protein ligase which is a core component of several complexes mainly involved in pre-mRNA splicing and DNA repair. Required for pre-mRNA splicing as component of the spliceosome. Core component of the PRP19C/Prp19 complex/NTC/Nineteen complex which is part of the spliceosome and participates in its assembly, its remodeling and is required for its activity. During assembly of the spliceosome, mediates 'Lys-63'-linked polyubiquitination of the U4 spliceosomal protein PRPF3. Ubiquitination of PRPF3 allows its recognition by the U5 component PRPF8 and stabilizes the U4/U5/U6 tri-snRNP spliceosomal complex. Recruited to RNA polymerase II C-terminal domain (CTD) and the pre-mRNA, it may also couple the transcriptional and spliceosomal machineries. The XAB2 complex, which contains PRPF19, is also involved in pre-mRNA splicing, transcription and transcription-coupled repair. Beside its role in pre-mRNA splicing PRPF19, as part of the PRP19-CDC5L complex, plays a role in the DNA damage response/DDR. It is recruited to the sites of DNA damage by the RPA complex where PRPF19 directly ubiquitinates RPA1 and RPA2. 'Lys-63'-linked polyubiquitination of the RPA complex allows the recruitment of the ATR-ATRIP complex and the activation of ATR, a master regulator of the DNA damage response. May also play a role in DNA double-strand break (DSB) repair by recruiting the repair factor SETMAR to altered DNA. As part of the PSO4 complex may also be involved in the DNA interstrand cross-links/ICLs repair process. In addition, may also mediate 'Lys-48'-linked polyubiquitination of substrates and play a role in proteasomal degradation. May play a role in the biogenesis of lipid droplets. May play a role in neural differentiation possibly through its function as part of the spliceosome. Its function is as follows. Forced expression leads to suppression of neuronal differentiation, and on the contrary to stimulation of astroglial cell differentiation in retinoic acid-primed P19 cells. The protein is Pre-mRNA-processing factor 19 of Mus musculus (Mouse).